A 117-amino-acid polypeptide reads, in one-letter code: Hydrogenase maturation factor HypA (117 aa).

His2 is a binding site for Ni(2+). Positions 73, 76, 89, and 92 each coordinate Zn(2+).

It belongs to the HypA/HybF family.

Involved in the maturation of [NiFe] hydrogenases. Required for nickel insertion into the metal center of the hydrogenase. The sequence is that of Hydrogenase maturation factor HypA from Shewanella baltica (strain OS195).